Consider the following 881-residue polypeptide: Cell wall protein PRY3 (881 aa).

The first 18 residues, 1 to 18 (MLEFPISVLLGCLVAVKA), serve as a signal peptide directing secretion. The SCP domain maps to 30-144 (LNEHNKFRAL…TWNNYIVCSY (115 aa)). A glycan (N-linked (GlcNAc...) asparagine) is linked at N101. The tract at residues 262–313 (VVSSDATSSTTTTSSVATSSSTTSSDPTSSTAAASSSDPASSSAAASSSAST) is disordered. N360 carries an N-linked (GlcNAc...) asparagine glycan. 2 disordered regions span residues 381–400 (AADD…VSEH) and 453–494 (VSST…NSAA). The segment covering 386–400 (QGSTSKEATSSVSEH) has biased composition (polar residues). 4 N-linked (GlcNAc...) asparagine glycosylation sites follow: N488, N535, N547, and N569. The disordered stretch occupies residues 579 to 611 (IDPTLDPTDNSASPTDNAKHTSTYGSSSTGASL). Over residues 585-594 (PTDNSASPTD) the composition is skewed to polar residues. The segment covering 599-611 (TSTYGSSSTGASL) has biased composition (low complexity). N-linked (GlcNAc...) asparagine glycosylation occurs at N625. 2 disordered regions span residues 758 to 788 (LASD…TTTT) and 800 to 830 (PSST…MHQP). Low complexity-rich tracts occupy residues 776-788 (STSN…TTTT) and 808-820 (RTTT…STTS). Residues 821-830 (QQDGSAMHQP) are compositionally biased toward polar residues. G853 carries GPI-anchor amidated glycine lipidation. A propeptide spans 854 to 881 (AATPLSIFQCNSLAGTIAAFVVAVLFAF) (removed in mature form).

Belongs to the CRISP family. In terms of processing, the GPI-anchor is attached to the protein in the endoplasmic reticulum and serves to target the protein to the cell surface. There, the glucosamine-inositol phospholipid moiety is cleaved off and the GPI-modified mannoprotein is covalently attached via its lipidless GPI glycan remnant to the 1,6-beta-glucan of the outer cell wall layer.

It localises to the secreted. The protein resides in the cell wall. It is found in the membrane. The full-length isoform (isoform Long) is a daughter cell-specific cell wall protein required for efficient export of lipids such as acetylated sterols. Acts in detoxification of hydrophobic compounds. Involved in tolerance to organic solvents such as dimethyl sulfoxide (DMSO). Also plays a role as an inhibitor of mating. STE12 is utilized as a repressor of full-length PRY3 transcription, ensuring efficient mating. Functionally, there is no evidence that production of the short PRY3 transcript (isoform Short) is anything more than an adventitious by-product of the mechanism responsible for the repression of the full-length transcript. Moreover, no disadvantage is detectable for cells unable to make the short transcript. This chain is Cell wall protein PRY3 (PRY3), found in Saccharomyces cerevisiae (strain ATCC 204508 / S288c) (Baker's yeast).